The primary structure comprises 174 residues: ATP synthase subunit delta, sodium ion specific (174 aa).

Belongs to the ATPase delta chain family. F-type ATPases have 2 components, F(1) - the catalytic core - and F(0) - the membrane proton channel. F(1) has five subunits: alpha(3), beta(3), gamma(1), delta(1), epsilon(1). F(0) has three main subunits: a(1), b(2) and c(10-14). The alpha and beta chains form an alternating ring which encloses part of the gamma chain. F(1) is attached to F(0) by a central stalk formed by the gamma and epsilon chains, while a peripheral stalk is formed by the delta and b chains.

Its subcellular location is the cell inner membrane. In terms of biological role, f(1)F(0) ATP synthase produces ATP from ADP in the presence of a proton or sodium gradient. F-type ATPases consist of two structural domains, F(1) containing the extramembraneous catalytic core and F(0) containing the membrane proton channel, linked together by a central stalk and a peripheral stalk. During catalysis, ATP synthesis in the catalytic domain of F(1) is coupled via a rotary mechanism of the central stalk subunits to proton translocation. Its function is as follows. This protein is part of the stalk that links CF(0) to CF(1). It either transmits conformational changes from CF(0) to CF(1) or is implicated in proton conduction. The polypeptide is ATP synthase subunit delta, sodium ion specific (Ilyobacter tartaricus).